A 252-amino-acid chain; its full sequence is Ribosomal RNA small subunit methyltransferase J (252 aa).

S-adenosyl-L-methionine-binding positions include Arg-101–Asp-102, Glu-117–Arg-118, Ser-153–Ser-154, and Asp-171.

This sequence belongs to the methyltransferase superfamily. RsmJ family.

It is found in the cytoplasm. The enzyme catalyses guanosine(1516) in 16S rRNA + S-adenosyl-L-methionine = N(2)-methylguanosine(1516) in 16S rRNA + S-adenosyl-L-homocysteine + H(+). Specifically methylates the guanosine in position 1516 of 16S rRNA. The protein is Ribosomal RNA small subunit methyltransferase J of Salmonella typhi.